Consider the following 60-residue polypeptide: Cytotoxin 2 (60 aa).

Cystine bridges form between Cys-3–Cys-21, Cys-14–Cys-38, Cys-42–Cys-53, and Cys-54–Cys-59.

The protein belongs to the three-finger toxin family. Short-chain subfamily. Type IA cytotoxin sub-subfamily. In terms of assembly, monomer in solution; Homodimer and oligomer in the presence of negatively charged lipids forming a pore with a size ranging between 20 and 30 Angstroms. Expressed by the venom gland.

The protein localises to the secreted. Its subcellular location is the target cell membrane. Its function is as follows. This three-finger cytotoxin is a basic protein that interacts and penetrates into the cell membrane, with the tips of all the three loops. Cytotoxins which have a Pro-30 (P-type) interacts with membrane stronger that those which have a 'Ser-28' (S-type). CTII interacts with membrane stronger than CTI. The sequence is that of Cytotoxin 2 from Naja oxiana (Central Asian cobra).